Here is a 205-residue protein sequence, read N- to C-terminus: Ribonuclease HII (205 aa).

The RNase H type-2 domain maps to 13 to 205; sequence TIVAGVDEVG…APVKYMLSMC (193 aa). The a divalent metal cation site is built by aspartate 19, glutamate 20, and aspartate 114.

Belongs to the RNase HII family. The cofactor is Mn(2+). Mg(2+) serves as cofactor.

It localises to the cytoplasm. It carries out the reaction Endonucleolytic cleavage to 5'-phosphomonoester.. In terms of biological role, endonuclease that specifically degrades the RNA of RNA-DNA hybrids. In Blochmanniella floridana, this protein is Ribonuclease HII.